Here is a 105-residue protein sequence, read N- to C-terminus: Cell division topological specificity factor (105 aa).

It belongs to the MinE family.

Its function is as follows. Prevents the cell division inhibition by proteins MinC and MinD at internal division sites while permitting inhibition at polar sites. This ensures cell division at the proper site by restricting the formation of a division septum at the midpoint of the long axis of the cell. This is Cell division topological specificity factor from Prochlorococcus marinus (strain MIT 9515).